The primary structure comprises 134 residues: Urease subunit beta (134 aa).

This sequence belongs to the urease beta subunit family. In terms of assembly, heterotrimer of UreA (gamma), UreB (beta) and UreC (alpha) subunits. Three heterotrimers associate to form the active enzyme.

Its subcellular location is the cytoplasm. It carries out the reaction urea + 2 H2O + H(+) = hydrogencarbonate + 2 NH4(+). Its pathway is nitrogen metabolism; urea degradation; CO(2) and NH(3) from urea (urease route): step 1/1. The chain is Urease subunit beta from Staphylococcus saprophyticus subsp. saprophyticus (strain ATCC 15305 / DSM 20229 / NCIMB 8711 / NCTC 7292 / S-41).